A 365-amino-acid chain; its full sequence is tRNA/tmRNA (uracil-C(5))-methyltransferase (365 aa).

The S-adenosyl-L-methionine site is built by glutamine 189, tyrosine 217, asparagine 222, glutamate 238, and aspartate 298. Residue cysteine 323 is the Nucleophile of the active site. Residue glutamate 357 is the Proton acceptor of the active site.

It belongs to the class I-like SAM-binding methyltransferase superfamily. RNA M5U methyltransferase family. TrmA subfamily.

The enzyme catalyses uridine(54) in tRNA + S-adenosyl-L-methionine = 5-methyluridine(54) in tRNA + S-adenosyl-L-homocysteine + H(+). It carries out the reaction uridine(341) in tmRNA + S-adenosyl-L-methionine = 5-methyluridine(341) in tmRNA + S-adenosyl-L-homocysteine + H(+). In terms of biological role, dual-specificity methyltransferase that catalyzes the formation of 5-methyluridine at position 54 (m5U54) in all tRNAs, and that of position 341 (m5U341) in tmRNA (transfer-mRNA). This is tRNA/tmRNA (uracil-C(5))-methyltransferase from Shewanella sp. (strain W3-18-1).